The chain runs to 898 residues: MSKLVIVESPTKARTIRNYLPQDYRVEASMGHVRDLPASAEEVPAAYKDKSWANLGVNVEDHFSPLYVIPKSKKKVVKELQTALKNADEVILATDEDREGESISWHLLQLLQPKVPIKRMVFHEITQEAIRSALENCRDIDENLVHAQETRRILDRLVGYTLSPLLWKKIAWGLSAGRVQSVAVRLIVQRERARRAFKTAGYWDLKAELEQNKNPFQAKLMTLGGTKLANGSDFDPNTGALLPDKQVVVLDEAQAIALKERLTGKPWAVVNTEEKPGVRKPSPPFTTSTLQQEANRKLGISARDTMRVAQKLYEEGYITYMRTDSVHLSDQAVTAARNCVQQMYGKEYLSPQPKQYTTKSKGAQEAHEAIRPAGTEFRIPNQTGLKDRELALYELIWKRTVACQMADARITQLSVLLKVEDAEFRAAGKRIDFPGYFRAYVEGSDDPDAALENQEVILPPLKVGDRPNCREIDTVGHETQPPARYTEASLVKTLESEGVGRPSTYASIIGTIIDRGYVQMRSKALTPTFTAFAVVSLLESHFPDLVDTGFTSRMEQKLDEIAIGKTQWLPYLQGFFLGESGLENQVKVRQDQIDPAIAKAIELENLAAKVKIGKFGPYIEIPQGEEIITASIPQDLTPADLNPEQVAVLLKQKTEGPDKVGIHPETGEPIFILIGAYGPYVQLGEATEENKKPKRTSLPKGVKPEDVTLEMAVGLLALPRNLGEHPESGKNIKASLGRFGPYVVHDQGKDGKDYRSLKGDDDVLTITLERALELLAEPKRGRGSRTPLKQLGLHPEDQEPVNLFKGPYGVYIKHGKVNASLPEGETEETITLEKALPLLAEKAGSGKKTSRKKATTTAKGTKKTTSKKASATGTAKKTTTKRTTRKKAASPDQSSEAG.

In terms of domain architecture, Toprim spans 2-126 (SKLVIVESPT…IKRMVFHEIT (125 aa)). 2 residues coordinate Mg(2+): Glu-8 and Asp-95. The 443-residue stretch at 141 to 583 (DENLVHAQET…GFFLGESGLE (443 aa)) folds into the Topo IA-type catalytic domain. Positions 175 to 180 (SAGRVQ) are interaction with DNA. Tyr-320 functions as the O-(5'-phospho-DNA)-tyrosine intermediate in the catalytic mechanism. Residues 840 to 898 (AEKAGSGKKTSRKKATTTAKGTKKTTSKKASATGTAKKTTTKRTTRKKAASPDQSSEAG) are disordered. The segment covering 848–866 (KTSRKKATTTAKGTKKTTS) has biased composition (basic residues). Low complexity predominate over residues 867 to 877 (KKASATGTAKK). The span at 878–888 (TTTKRTTRKKA) shows a compositional bias: basic residues.

This sequence belongs to the type IA topoisomerase family. Monomer. It depends on Mg(2+) as a cofactor.

The catalysed reaction is ATP-independent breakage of single-stranded DNA, followed by passage and rejoining.. Its function is as follows. Releases the supercoiling and torsional tension of DNA, which is introduced during the DNA replication and transcription, by transiently cleaving and rejoining one strand of the DNA duplex. Introduces a single-strand break via transesterification at a target site in duplex DNA. The scissile phosphodiester is attacked by the catalytic tyrosine of the enzyme, resulting in the formation of a DNA-(5'-phosphotyrosyl)-enzyme intermediate and the expulsion of a 3'-OH DNA strand. The free DNA strand then undergoes passage around the unbroken strand, thus removing DNA supercoils. Finally, in the religation step, the DNA 3'-OH attacks the covalent intermediate to expel the active-site tyrosine and restore the DNA phosphodiester backbone. The chain is DNA topoisomerase 1 from Synechocystis sp. (strain ATCC 27184 / PCC 6803 / Kazusa).